We begin with the raw amino-acid sequence, 222 residues long: 2-hydroxy-3-keto-5-methylthiopentenyl-1-phosphate phosphatase (222 aa).

The protein belongs to the HAD-like hydrolase superfamily. MtnX family.

The catalysed reaction is 2-hydroxy-5-methylsulfanyl-3-oxopent-1-enyl phosphate + H2O = 1,2-dihydroxy-5-(methylsulfanyl)pent-1-en-3-one + phosphate. The protein operates within amino-acid biosynthesis; L-methionine biosynthesis via salvage pathway; L-methionine from S-methyl-5-thio-alpha-D-ribose 1-phosphate: step 4/6. In terms of biological role, dephosphorylates 2-hydroxy-3-keto-5-methylthiopentenyl-1-phosphate (HK-MTPenyl-1-P) yielding 1,2-dihydroxy-3-keto-5-methylthiopentene (DHK-MTPene). This Brevibacillus brevis (strain 47 / JCM 6285 / NBRC 100599) protein is 2-hydroxy-3-keto-5-methylthiopentenyl-1-phosphate phosphatase.